The chain runs to 407 residues: Glucose-1-phosphate adenylyltransferase 2 (407 aa).

Alpha-D-glucose 1-phosphate-binding positions include tyrosine 97, glycine 162, 177-178 (EK), and serine 195.

This sequence belongs to the bacterial/plant glucose-1-phosphate adenylyltransferase family. Homotetramer.

The catalysed reaction is alpha-D-glucose 1-phosphate + ATP + H(+) = ADP-alpha-D-glucose + diphosphate. Its pathway is glycan biosynthesis; glycogen biosynthesis. Functionally, involved in the biosynthesis of ADP-glucose, a building block required for the elongation reactions to produce glycogen. Catalyzes the reaction between ATP and alpha-D-glucose 1-phosphate (G1P) to produce pyrophosphate and ADP-Glc. The polypeptide is Glucose-1-phosphate adenylyltransferase 2 (Vibrio cholerae serotype O1 (strain ATCC 39315 / El Tor Inaba N16961)).